The primary structure comprises 464 residues: Mothers against decapentaplegic homolog 5 (464 aa).

The MH1 domain occupies 13–137 (PAVKRLLGWK…YKRVESPVLP (125 aa)). Residues C65, C110, C122, and H127 each coordinate Zn(2+). The interval 166–258 (HMPLNATFPE…LAPQNMPRGD (93 aa)) is disordered. Residues 173 to 183 (FPESFQQHSGG) show a composition bias toward polar residues. Low complexity predominate over residues 199 to 216 (ASSGTYPNSPASSGPSSP). Residues 237–251 (QDGSQSMETGSSLAP) are compositionally biased toward polar residues. The region spanning 270–464 (WCSIVYYELN…SPLNPISSVS (195 aa)) is the MH2 domain.

It belongs to the dwarfin/SMAD family. As to quaternary structure, may form trimers with the co-SMAD SMAD4.

The protein localises to the cytoplasm. Its subcellular location is the nucleus. Involved in ventralization. May mediate Bmp2b signaling during early phases of embryonic dorsal-ventral pattern formation. Required for initiation of Smad1 expression during gastrulation. The protein is Mothers against decapentaplegic homolog 5 (smad5) of Danio rerio (Zebrafish).